We begin with the raw amino-acid sequence, 374 residues long: Small ribosomal subunit protein uS4m (374 aa).

Positions 259–323 constitute an S4 RNA-binding domain; sequence GRLENFLMRL…KKLYFFIKSK (65 aa).

This sequence belongs to the universal ribosomal protein uS4 family.

The protein resides in the mitochondrion. The sequence is that of Small ribosomal subunit protein uS4m (RPS4) from Acanthamoeba castellanii (Amoeba).